A 312-amino-acid chain; its full sequence is Malate dehydrogenase (312 aa).

NAD(+) is bound by residues 12 to 17 (GAGFTG) and Asp-36. Substrate contacts are provided by Arg-87 and Arg-93. Residues Asn-100 and 123–125 (LTN) contribute to the NAD(+) site. Asn-125 serves as a coordination point for substrate. Ser-149 is modified (phosphoserine). Arg-156 provides a ligand contact to substrate. His-180 acts as the Proton acceptor in catalysis.

This sequence belongs to the LDH/MDH superfamily. MDH type 3 family.

The enzyme catalyses (S)-malate + NAD(+) = oxaloacetate + NADH + H(+). Its function is as follows. Catalyzes the reversible oxidation of malate to oxaloacetate. The sequence is that of Malate dehydrogenase from Bacillus cereus (strain ZK / E33L).